Here is a 437-residue protein sequence, read N- to C-terminus: GTPase Der (437 aa).

EngA-type G domains are found at residues 2 to 167 (ATVL…EKKG) and 180 to 356 (IRVA…NSLF). GTP contacts are provided by residues 8 to 15 (GKSNVGKS), 55 to 59 (DTCGI), 118 to 121 (NKSE), 186 to 193 (GRPNAGKS), 233 to 237 (DTAGL), and 299 to 302 (NKID). The region spanning 357–437 (YRVQTSAVNA…PIFLKFKNRH (81 aa)) is the KH-like domain.

Belongs to the TRAFAC class TrmE-Era-EngA-EngB-Septin-like GTPase superfamily. EngA (Der) GTPase family. Associates with the 50S ribosomal subunit.

In terms of biological role, GTPase that plays an essential role in the late steps of ribosome biogenesis. The chain is GTPase Der from Thermosipho melanesiensis (strain DSM 12029 / CIP 104789 / BI429).